Here is a 324-residue protein sequence, read N- to C-terminus: Acetyl-coenzyme A carboxylase carboxyl transferase subunit alpha (324 aa).

In terms of domain architecture, CoA carboxyltransferase C-terminal spans I37–Q291.

The protein belongs to the AccA family. In terms of assembly, acetyl-CoA carboxylase is a heterohexamer composed of biotin carboxyl carrier protein (AccB), biotin carboxylase (AccC) and two subunits each of ACCase subunit alpha (AccA) and ACCase subunit beta (AccD).

The protein localises to the cytoplasm. The catalysed reaction is N(6)-carboxybiotinyl-L-lysyl-[protein] + acetyl-CoA = N(6)-biotinyl-L-lysyl-[protein] + malonyl-CoA. The protein operates within lipid metabolism; malonyl-CoA biosynthesis; malonyl-CoA from acetyl-CoA: step 1/1. Its function is as follows. Component of the acetyl coenzyme A carboxylase (ACC) complex. First, biotin carboxylase catalyzes the carboxylation of biotin on its carrier protein (BCCP) and then the CO(2) group is transferred by the carboxyltransferase to acetyl-CoA to form malonyl-CoA. The protein is Acetyl-coenzyme A carboxylase carboxyl transferase subunit alpha of Bacillus cereus (strain B4264).